A 58-amino-acid chain; its full sequence is Histatherin (58 aa).

Residues 1-19 (MKIFIFIFIMALILAMIRA) form the signal peptide.

The protein belongs to the histatin/statherin family. Expressed in mammary glands.

The protein localises to the secreted. This is Histatherin from Bos taurus (Bovine).